Reading from the N-terminus, the 163-residue chain is Cyclic pyranopterin monophosphate synthase (163 aa).

Residues 75 to 77 (MCH) and 113 to 114 (ME) each bind substrate. The active site involves D128.

Belongs to the MoaC family. In terms of assembly, homohexamer; trimer of dimers.

It carries out the reaction (8S)-3',8-cyclo-7,8-dihydroguanosine 5'-triphosphate = cyclic pyranopterin phosphate + diphosphate. It functions in the pathway cofactor biosynthesis; molybdopterin biosynthesis. Catalyzes the conversion of (8S)-3',8-cyclo-7,8-dihydroguanosine 5'-triphosphate to cyclic pyranopterin monophosphate (cPMP). The chain is Cyclic pyranopterin monophosphate synthase from Desulforapulum autotrophicum (strain ATCC 43914 / DSM 3382 / VKM B-1955 / HRM2) (Desulfobacterium autotrophicum).